We begin with the raw amino-acid sequence, 331 residues long: Ornithine lipid hydroxylase OlsE (331 aa).

5 consecutive transmembrane segments (helical) span residues 13 to 33, 37 to 57, 85 to 105, 120 to 140, and 189 to 209; these read VSSLLWPAILCAGLTGAYFAF, MHLLWFNVVYLSTVAIIALFE, GGVQIAAAIGTSFPMAVATVA, WPMAFQVVLGLVIAEFGLYMA, and LLGAPLPVFLWIGAVTAFIGL. The region spanning 126–260 is the Fatty acid hydroxylase domain; it reads VVLGLVIAEF…LVIWDQLLGT (135 aa).

The protein belongs to the sterol desaturase family.

It localises to the cell inner membrane. It functions in the pathway lipid metabolism. Functionally, involved in the biosynthesis of ornithine lipids (OLs), which are phosphorus-free membrane lipids. Is responsible for the hydroxylation of OL within the ornithine moiety. The polypeptide is Ornithine lipid hydroxylase OlsE (Rhizobium tropici).